Here is a 197-residue protein sequence, read N- to C-terminus: MAYEDLIKSIESAAEEKKQEVLRNAEREVEAILREAETESSAIHAQYLEKAKRDLILENNRQKFLAKQEVKKRISAVRQKLIDDAFSRSKEKISGIRSDPSYPALYERLTREVISALAGEEIILHIDPADSKICSDVLKKTGIVCDIMQDITTIGGLSGTSADGRIRAYNTLESRMERIRDTSTLEIINLILGGPDG.

This sequence belongs to the V-ATPase E subunit family. As to quaternary structure, has multiple subunits with at least A(3), B(3), C, D, E, F, H, I and proteolipid K(x).

It localises to the cell membrane. Its function is as follows. Component of the A-type ATP synthase that produces ATP from ADP in the presence of a proton gradient across the membrane. In Methanospirillum hungatei JF-1 (strain ATCC 27890 / DSM 864 / NBRC 100397 / JF-1), this protein is A-type ATP synthase subunit E 2.